The chain runs to 401 residues: MASNMLSIANPSLRVYNKGFSEFSGLHTSSLPFGRKGSDDLMAFVSFQTNAVGGKRSSQNGVVEAKLKVAINGFGRIGRNFLRCWHGRKDSPLDVVVINDTGGVKQASHLLKYDSILGTFDADVKTAGDSAISVDGKVIKVVSDRNPVNLPWGDMGIDLVIEGTGVFVDRDGAGKHLQAGAKKVLITAPGKGDIPTYVVGVNEEGYTHADTIISNASCTTNCLAPFVKVLDQKFGIIKGTMTTTHSYTGDQRLLDASHRDLRRARAACLNIVPTSTGAAKAVALVLPNLKGKLNGIALRVPTPNVSVVDLVVQVSKKTFAEEVNAAFRESADNELKGILSVCDEPLVSIDFRCTDVSSTIDSSLTMVMGDDMVKVIAWYDNEWGYSQRVVDLADIVANKWQ.

Residues 1–65 (MASNMLSIAN…RSSQNGVVEA (65 aa)) constitute a chloroplast transit peptide. NADP(+)-binding positions include 76-77 (RI), Asp100, and Arg145. Residues 217–219 (SCT), Thr248, Arg263, 276–277 (TG), and Arg299 contribute to the D-glyceraldehyde 3-phosphate site. Cys218 (nucleophile) is an active-site residue. NADP(+) is bound at residue Asn381.

It belongs to the glyceraldehyde-3-phosphate dehydrogenase family. As to quaternary structure, tetramer of either four A chains (GAPDH 2) or two A and two B chains (GAPDH 1).

It is found in the plastid. The protein resides in the chloroplast. It catalyses the reaction D-glyceraldehyde 3-phosphate + phosphate + NADP(+) = (2R)-3-phospho-glyceroyl phosphate + NADPH + H(+). The protein operates within carbohydrate biosynthesis; Calvin cycle. In Spinacia oleracea (Spinach), this protein is Glyceraldehyde-3-phosphate dehydrogenase A, chloroplastic (GAPA).